We begin with the raw amino-acid sequence, 216 residues long: Probable GH family 25 lysozyme 5 (216 aa).

Residues 1 to 20 form the signal peptide; that stretch reads MRFIISLLFVFTLIFNLAFS. A Ch-type lysozyme domain is found at 21–216; sequence HIGIDVSSGT…GLGIDKNYWE (196 aa). Residue Asp-25 is part of the active site. N-linked (GlcNAc...) asparagine glycosylation occurs at Asn-31. Catalysis depends on residues Asp-113 and Glu-115.

It belongs to the glycosyl hydrolase 25 family.

Its subcellular location is the secreted. It catalyses the reaction Hydrolysis of (1-&gt;4)-beta-linkages between N-acetylmuramic acid and N-acetyl-D-glucosamine residues in a peptidoglycan and between N-acetyl-D-glucosamine residues in chitodextrins.. The chain is Probable GH family 25 lysozyme 5 from Dictyostelium discoideum (Social amoeba).